We begin with the raw amino-acid sequence, 582 residues long: Aspartate--tRNA(Asp/Asn) ligase (582 aa).

Residue Glu-177 participates in L-aspartate binding. An aspartate region spans residues 201-204 (QLFK). Residue Arg-223 participates in L-aspartate binding. Residues 223–225 (RDE) and Gln-232 each bind ATP. His-447 lines the L-aspartate pocket. Position 481 (Glu-481) interacts with ATP. Arg-488 contacts L-aspartate. 533–536 (GLDR) serves as a coordination point for ATP.

It belongs to the class-II aminoacyl-tRNA synthetase family. Type 1 subfamily. As to quaternary structure, homodimer.

It is found in the cytoplasm. The enzyme catalyses tRNA(Asx) + L-aspartate + ATP = L-aspartyl-tRNA(Asx) + AMP + diphosphate. Aspartyl-tRNA synthetase with relaxed tRNA specificity since it is able to aspartylate not only its cognate tRNA(Asp) but also tRNA(Asn). Reaction proceeds in two steps: L-aspartate is first activated by ATP to form Asp-AMP and then transferred to the acceptor end of tRNA(Asp/Asn). The protein is Aspartate--tRNA(Asp/Asn) ligase of Chlamydia trachomatis serovar A (strain ATCC VR-571B / DSM 19440 / HAR-13).